The primary structure comprises 269 residues: Ribosomal RNA small subunit methyltransferase A (269 aa).

S-adenosyl-L-methionine contacts are provided by His-11, Leu-13, Gly-38, Glu-59, Asp-84, and Asn-105.

Belongs to the class I-like SAM-binding methyltransferase superfamily. rRNA adenine N(6)-methyltransferase family. RsmA subfamily.

The protein localises to the cytoplasm. It catalyses the reaction adenosine(1518)/adenosine(1519) in 16S rRNA + 4 S-adenosyl-L-methionine = N(6)-dimethyladenosine(1518)/N(6)-dimethyladenosine(1519) in 16S rRNA + 4 S-adenosyl-L-homocysteine + 4 H(+). In terms of biological role, specifically dimethylates two adjacent adenosines (A1518 and A1519) in the loop of a conserved hairpin near the 3'-end of 16S rRNA in the 30S particle. May play a critical role in biogenesis of 30S subunits. The chain is Ribosomal RNA small subunit methyltransferase A from Acaryochloris marina (strain MBIC 11017).